Consider the following 251-residue polypeptide: L-xylulose reductase (251 aa).

An NADP(+)-binding site is contributed by 13–42 (LVTGASQGIGKEICLSLAKAGAQVIAFARN). Residue serine 143 coordinates substrate. The active-site Proton acceptor is the tyrosine 156. NADP(+) is bound at residue lysine 160.

It belongs to the short-chain dehydrogenases/reductases (SDR) family. As to quaternary structure, homotetramer. Expressed in intestine, gonad and spermatids (at protein level). Expressed in intestine, uterine seam, gonadal sheath cells, spermathecal-uterus valve and spermatids.

The protein resides in the cell membrane. It catalyses the reaction xylitol + NADP(+) = L-xylulose + NADPH + H(+). With respect to regulation, strongly inhibited by 10% dimethyl sulfoxide. Catalyzes the NADPH-dependent reduction of L-xylulose, D-xylulose, L-(+) erythrulose, D-erythrose, D-threose, L-ribulose, 1,4-dibromo-2,3-butanedione and 2,3-heptanedione. Also active against isatin, 9,10-phenanthrenequinone, menadione, 2,3-hexaenadione and 3,4-hexahenadione. No activity observed when tested using NADH rather than NADPH. The sequence is that of L-xylulose reductase from Caenorhabditis elegans.